The primary structure comprises 202 residues: Putative zinc finger protein ZK686.5 (202 aa).

Residues 43–63 form a disordered region; the sequence is RKNVDNTSTRKPYSYKDRKRK. C2H2-type zinc fingers lie at residues 110–133, 138–160, and 169–192; these read TYCELCEQNFSSSKMLLLHRGKVH, IECHLCMKLFSQTIQFNRHMKTH, and VQCELCDRQFKDKQSLRTHWDVSH.

The protein resides in the nucleus. The protein is Putative zinc finger protein ZK686.5 of Caenorhabditis elegans.